The chain runs to 496 residues: Solute carrier family 2, facilitated glucose transporter member 3 (496 aa).

Topologically, residues 1 to 11 are cytoplasmic; that stretch reads MADKKKITASL. A helical membrane pass occupies residues 12–33; the sequence is IYAVSVAAIGSLQFGYNTGVIN. Residues 34-65 lie on the Extracellular side of the membrane; that stretch reads APEKIIQAFYNRTLSQRSGETISPELLTSLWS. Residue Asn44 is glycosylated (N-linked (GlcNAc...) asparagine). A helical membrane pass occupies residues 66-86; sequence LSVAIFSVGGMIGSFSVSLFF. Residues 87–91 are Cytoplasmic-facing; it reads NRFGR. Residues 92-112 traverse the membrane as a helical segment; sequence RNSMLLVNVLAFAGGALMALS. The Extracellular segment spans residues 113–119; the sequence is KIAKAVE. A helical membrane pass occupies residues 120-143; it reads MLIIGRFIIGLFCGLCTGFVPMYI. The Cytoplasmic segment spans residues 144 to 154; the sequence is SEVSPTSLRGA. Residues 155–175 traverse the membrane as a helical segment; the sequence is FGTLNQLGIVVGILVAQIFGL. Gln160 serves as a coordination point for D-glucose. Residues 176–184 lie on the Extracellular side of the membrane; the sequence is EGIMGTEAL. Residues 185-205 form a helical membrane-spanning segment; it reads WPLLLGFTIVPAVLQCVALLF. At 206 to 270 the chain is on the cytoplasmic side; that stretch reads CPESPRFLLI…LFRSPNYRQP (65 aa). A helical transmembrane segment spans residues 271 to 291; the sequence is IIISITLQLSQQLSGINAVFY. Residues 278-280 form an important for selectivity against fructose region; that stretch reads QLS. D-glucose is bound by residues 281 to 282 and Asn287; that span reads QQ. The Extracellular segment spans residues 292–305; the sequence is YSTGIFERAGITQP. Residues 306-326 traverse the membrane as a helical segment; that stretch reads VYATIGAGVVNTVFTVVSLFL. Asn316 is a D-glucose binding site. The Cytoplasmic portion of the chain corresponds to 327 to 332; it reads VERAGR. A helical transmembrane segment spans residues 333 to 353; it reads RTLHLVGLGGMAVCAAVMTIA. The Extracellular segment spans residues 354–362; that stretch reads LALKEKWIR. The helical transmembrane segment at 363-388 threads the bilayer; sequence YISIVATFGFVALFEIGPGPIPWFIV. D-glucose is bound by residues Glu377 and Trp385. Topologically, residues 389–398 are cytoplasmic; sequence AELFSQGPRP. The chain crosses the membrane as a helical span at residues 399–419; the sequence is AAMAVAGCSNWTSNFLVGMLF. Over 420–428 the chain is Extracellular; it reads PYAEKLCGP. Residues 429 to 449 traverse the membrane as a helical segment; the sequence is YVFLIFLVFLLIFFIFTYFKV. Residues 450–496 are Cytoplasmic-facing; sequence PETKGRTFEDISRGFEEQVETSSPSSPPIEKNPMVEMNSIEPDKEVA. The disordered stretch occupies residues 464–496; that stretch reads FEEQVETSSPSSPPIEKNPMVEMNSIEPDKEVA.

The protein belongs to the major facilitator superfamily. Sugar transporter (TC 2.A.1.1) family. Glucose transporter subfamily.

It localises to the cell membrane. It is found in the perikaryon. Its subcellular location is the cell projection. The enzyme catalyses D-glucose(out) = D-glucose(in). It carries out the reaction D-galactose(in) = D-galactose(out). With respect to regulation, deoxyglucose transport is inhibited by D-glucose, D-galactose and maltose. Galactose transport is inhibited by D-glucose and maltose. In terms of biological role, facilitative glucose transporter. Can also mediate the uptake of various other monosaccharides across the cell membrane. Mediates the uptake of glucose, 2-deoxyglucose, galactose, mannose, xylose and fucose, and probably also dehydroascorbate. Does not mediate fructose transport. Required for mesendoderm differentiation. This is Solute carrier family 2, facilitated glucose transporter member 3 from Gallus gallus (Chicken).